Consider the following 309-residue polypeptide: MEEKSFAKELDQWIEQLNECRQLSESQVRSLCEKAKEILTKESNVQEVRCPVTVCGDVHGQFHDLMELFRIGGKSPDTNYLFMGDYVDRGYYSVETVTLLVALKVRYPERITILRGNHESRQITQVYGFYDECLRKYGNANVWKYFTDLFDYLPLTALVDGQIFCLHGGLSPSIDTLDHIRALDRLQEVPHEGPMCDLLWSDPDDRGGWGISPRGAGYTFGQDISETFNHANGLTLVSRAHQLVMEGYNWCHDRNVVTIFSAPNYCYRCGNQAAIMELDDTLKYSFLQFDPAPRRGEPHVTRRTPDYFL.

Asp-57, His-59, Asp-85, and Asn-117 together coordinate Mn(2+). Residues Asp-57, His-59, and Asp-85 each contribute to the Zn(2+) site. 2 residues coordinate Fe(3+): Asp-85 and Asn-117. The active-site Proton donor is His-118. Mn(2+) contacts are provided by His-167 and His-241. Fe(3+)-binding residues include His-167 and His-241. A Phosphotyrosine modification is found at Tyr-307. Leu-309 carries the post-translational modification Leucine methyl ester.

Belongs to the PPP phosphatase family. PP-1 subfamily. In terms of assembly, PP2A consists of a common heterodimeric core enzyme, composed of PPP2CA, a 36 kDa catalytic subunit (subunit C), and PPP2R1A, a 65 kDa constant regulatory subunit (PR65 or subunit A), that associates with a variety of regulatory subunits. Proteins that associate with the core dimer include three families of regulatory subunits B (the R2/B/PR55/B55, R3/B''/PR72/PR130/PR59 and R5/B'/B56 families), the 48 kDa variable regulatory subunit, viral proteins, and cell signaling molecules. May indirectly interact with SGOL1, most probably through regulatory B56 subunits. Phosphatase component of the Integrator-PP2A (INTAC) complex, composed of the Integrator core complex and protein phosphatase 2A subunits PPP2CA and PPP2R1A. The cofactor is Mn(2+). Fe(3+) serves as cofactor. Zn(2+) is required as a cofactor. Reversibly methyl esterified on Leu-309 by leucine carboxyl methyltransferase 1 (LCMT1) and protein phosphatase methylesterase 1 (PPME1). Carboxyl methylation influences the affinity of the catalytic subunit for the different regulatory subunits, thereby modulating the PP2A holoenzyme's substrate specificity, enzyme activity and cellular localization. In terms of processing, phosphorylation of either threonine (by autophosphorylation-activated protein kinase) or tyrosine results in inactivation of the phosphatase. Auto-dephosphorylation has been suggested as a mechanism for reactivation.

It localises to the cytoplasm. Its subcellular location is the nucleus. The protein resides in the chromosome. The protein localises to the centromere. It is found in the cytoskeleton. It localises to the spindle pole. The catalysed reaction is O-phospho-L-seryl-[protein] + H2O = L-seryl-[protein] + phosphate. It catalyses the reaction O-phospho-L-threonyl-[protein] + H2O = L-threonyl-[protein] + phosphate. Inhibited by the interaction between PPP2R2A and ARPP19; this inhibition is enhanced when ARPP19 is phosphorylated. Inhibited by the interaction between PPP2R2A and PABIR1/FAM122A. Functionally, PP2A is the major phosphatase for microtubule-associated proteins (MAPs). PP2A can modulate the activity of phosphorylase B kinase casein kinase 2, mitogen-stimulated S6 kinase, and MAP-2 kinase. Key mediator of a quality checkpoint during transcription elongation as part of the Integrator-PP2A (INTAC) complex. The INTAC complex drives premature transcription termination of transcripts that are unfavorably configured for transcriptional elongation: within the INTAC complex, PPP2CA catalyzes dephosphorylation of the C-terminal domain (CTD) of Pol II subunit POLR2A/RPB1 and SUPT5H/SPT5, thereby preventing transcriptional elongation. This Gallus gallus (Chicken) protein is Serine/threonine-protein phosphatase 2A catalytic subunit alpha isoform (PPP2CA).